The following is an 83-amino-acid chain: MSSGRLLLLLGLLTLWAELTPVSGLGRPKFCELPAVSGFCKAYIPSFYYNPDASACQKFIYGGCGGNANKFKTIEECHRTCVG.

An N-terminal signal peptide occupies residues 1–25 (MSSGRLLLLLGLLTLWAELTPVSGL). The 51-residue stretch at 31–81 (CELPAVSGFCKAYIPSFYYNPDASACQKFIYGGCGGNANKFKTIEECHRTC) folds into the BPTI/Kunitz inhibitor domain. 3 cysteine pairs are disulfide-bonded: C31/C81, C40/C64, and C56/C77.

As to expression, expressed by the venom gland.

It is found in the secreted. In terms of biological role, serine protease inhibitor that strongly inhibits chymotrypsin (Ki=84.6 nM) and trypsin (Ki=391 nM). The chain is Kunitz-type serine protease inhibitor TCI from Ophiophagus hannah (King cobra).